A 69-amino-acid polypeptide reads, in one-letter code: Small, acid-soluble spore protein I (69 aa).

Belongs to the SspI family.

Its subcellular location is the spore core. The protein is Small, acid-soluble spore protein I of Bacillus mycoides (strain KBAB4) (Bacillus weihenstephanensis).